Reading from the N-terminus, the 640-residue chain is Calpain-5 (640 aa).

The region spanning 26–343 (LFEDPLFPAT…FTDIIKCRLI (318 aa)) is the Calpain catalytic domain. Active-site residues include Cys-81, His-252, and Asn-284. The tract at residues 344–496 (NTSYLSIHKT…VFTDVPSNCR (153 aa)) is domain III. In terms of domain architecture, C2 spans 499-617 (RLDEPPRTCW…HTLHLQDRSS (119 aa)).

This sequence belongs to the peptidase C2 family.

In terms of biological role, calcium-regulated non-lysosomal thiol-protease. This chain is Calpain-5 (Capn5), found in Mus musculus (Mouse).